An 876-amino-acid chain; its full sequence is Valine--tRNA ligase (876 aa).

Residues 44–54 (PNVTGKLHLGH) carry the 'HIGH' region motif. A 'KMSKS' region motif is present at residues 520 to 524 (KMSKS). K523 serves as a coordination point for ATP. A coiled-coil region spans residues 805-876 (LEGLIDMDKE…VKARIEQLKA (72 aa)).

This sequence belongs to the class-I aminoacyl-tRNA synthetase family. ValS type 1 subfamily. In terms of assembly, monomer.

It is found in the cytoplasm. The enzyme catalyses tRNA(Val) + L-valine + ATP = L-valyl-tRNA(Val) + AMP + diphosphate. Catalyzes the attachment of valine to tRNA(Val). As ValRS can inadvertently accommodate and process structurally similar amino acids such as threonine, to avoid such errors, it has a 'posttransfer' editing activity that hydrolyzes mischarged Thr-tRNA(Val) in a tRNA-dependent manner. This Staphylococcus carnosus (strain TM300) protein is Valine--tRNA ligase.